Here is an 87-residue protein sequence, read N- to C-terminus: Small ribosomal subunit protein uS15c (87 aa).

The protein belongs to the universal ribosomal protein uS15 family. In terms of assembly, part of the 30S ribosomal subunit.

Its subcellular location is the plastid. It localises to the chloroplast. The polypeptide is Small ribosomal subunit protein uS15c (rps15) (Oenothera glazioviana (Large-flowered evening primrose)).